Here is a 464-residue protein sequence, read N- to C-terminus: MKLYNTLTRKKEEFIPLEEGKVRMYACGPTVYNYFHIGNARTFMVFDALRRYLIYRGYDVTFVQNFTDVDDKIIRRANEEGVAPEEISERFIKEYFYDAGTLGIEKADIHPKVTENMAEIIAFVAKLVEKGHAYESNGDVYFDVSKYEEYGKLSKQSLEDLQAGARIEINEYKKNPLDFALWKSAKAGEPSWESPWGNGRPGWHIECSAMAKRYLGETIDIHGGGGDLVFPHHENEIAQSEACSGKKFANYWLHVGYLNVDNKKMSKSLNNFFTPREISEEFDLENLRFFMLSAHYRNPINFSRDLLEAAKNGLDRLYTGKNNLEYLLENAAEREVSEEEKNFIHGLQSFKNQFIDAVDDDFNTADGIAVIFDLVREINSHISEKNSKKAVEASYDLLMELTGVLGLLKREAEDLEEEIERLIAERQQARKDKNFALSDKIRDDLKEKGIVLEDTAQGVKWRKL.

Cys27 serves as a coordination point for Zn(2+). The 'HIGH' region motif lies at 29–39 (PTVYNYFHIGN). The Zn(2+) site is built by Cys207, His232, and Glu236. The 'KMSKS' region motif lies at 264-268 (KMSKS). Lys267 is an ATP binding site.

The protein belongs to the class-I aminoacyl-tRNA synthetase family. In terms of assembly, monomer. Zn(2+) is required as a cofactor.

Its subcellular location is the cytoplasm. The catalysed reaction is tRNA(Cys) + L-cysteine + ATP = L-cysteinyl-tRNA(Cys) + AMP + diphosphate. The polypeptide is Cysteine--tRNA ligase (Alkaliphilus oremlandii (strain OhILAs) (Clostridium oremlandii (strain OhILAs))).